The following is a 378-amino-acid chain: tRNA (guanine(26)-N(2))-dimethyltransferase (378 aa).

The Trm1 methyltransferase domain maps to 4–374 (KEVTEGKVRI…KGYEEIIRCV (371 aa)). Arginine 44, arginine 69, aspartate 87, aspartate 114, and alanine 115 together coordinate S-adenosyl-L-methionine. Residues cysteine 246, cysteine 249, cysteine 263, and cysteine 266 each coordinate Zn(2+).

The protein belongs to the class I-like SAM-binding methyltransferase superfamily. Trm1 family.

The catalysed reaction is guanosine(26) in tRNA + 2 S-adenosyl-L-methionine = N(2)-dimethylguanosine(26) in tRNA + 2 S-adenosyl-L-homocysteine + 2 H(+). Dimethylates a single guanine residue at position 26 of a number of tRNAs using S-adenosyl-L-methionine as donor of the methyl groups. The protein is tRNA (guanine(26)-N(2))-dimethyltransferase of Saccharolobus islandicus (strain L.S.2.15 / Lassen #1) (Sulfolobus islandicus).